A 150-amino-acid polypeptide reads, in one-letter code: Small ribosomal subunit protein uS11y (150 aa).

The residue at position 19 (Ser19) is a Phosphoserine.

Belongs to the universal ribosomal protein uS11 family.

The protein localises to the cytoplasm. This chain is Small ribosomal subunit protein uS11y (RPS14B), found in Arabidopsis thaliana (Mouse-ear cress).